Consider the following 1205-residue polypeptide: A disintegrin and metalloproteinase with thrombospondin motifs 3 (1205 aa).

Positions 1–20 (MVLLSLWLIAAALVEVRTSA) are cleaved as a signal peptide. The propeptide occupies 21–249 (DGQAGNEEMV…QLNETMRRRR (229 aa)). N-linked (GlcNAc...) asparagine glycans are attached at residues Asn-83, Asn-119, Asn-242, and Asn-345. In terms of domain architecture, Peptidase M12B spans 256-460 (YNIEVLLGVD…HSYDCLLDDP (205 aa)). 3 cysteine pairs are disulfide-bonded: Cys-333/Cys-382, Cys-376/Cys-455, and Cys-415/Cys-441. Residue His-398 participates in Zn(2+) binding. Glu-399 is an active-site residue. Residues His-402 and His-408 each contribute to the Zn(2+) site. In terms of domain architecture, Disintegrin spans 470–550 (ELPGINYSMD…MWKNANQQKQ (81 aa)). Asn-475 carries N-linked (GlcNAc...) asparagine glycosylation. Cystine bridges form between Cys-482–Cys-507, Cys-493–Cys-516, Cys-502–Cys-535, Cys-529–Cys-540, Cys-563–Cys-600, Cys-567–Cys-605, and Cys-578–Cys-590. The 56-residue stretch at 551–606 (DGNWGSWTKFGSCSRTCGTGVRFRTRQCNNPMPINGGQDCPGVNFEYQLCNTEECQ) folds into the TSP type-1 1 domain. Positions 713-844 (RTVKGTFTRT…NSNNVIQEEL (132 aa)) are spacer. N-linked (GlcNAc...) asparagine glycosylation occurs at Asn-814. TSP type-1 domains follow at residues 845 to 905 (DTFE…QECT), 906 to 965 (HPLW…NRVP), and 966 to 1014 (CPAQ…QLPP). The N-linked (GlcNAc...) asparagine glycan is linked to Asn-942. 3 disulfide bridges follow: Cys-978-Cys-1010, Cys-982-Cys-1015, and Cys-993-Cys-999. Residues 1015–1054 (CNDEPCLGDKSIFCQMEVLARYCSIPGYNKLCCESCSKRS) enclose the PLAC domain. Residues 1174–1205 (DSIGASSQARTSKKDGKIIDNRRPTRSSTLER) are disordered. A compositionally biased stretch (basic and acidic residues) spans 1185–1205 (SKKDGKIIDNRRPTRSSTLER).

Zn(2+) serves as cofactor. Post-translationally, the precursor is cleaved by a furin endopeptidase. In terms of processing, glycosylated. Can be O-fucosylated by POFUT2 on a serine or a threonine residue found within the consensus sequence C1-X(2)-(S/T)-C2-G of the TSP type-1 repeat domains where C1 and C2 are the first and second cysteine residue of the repeat, respectively. Fucosylated repeats can then be further glycosylated by the addition of a beta-1,3-glucose residue by the glucosyltransferase, B3GALTL. Fucosylation mediates the efficient secretion of ADAMTS family members. Can also be C-glycosylated with one or two mannose molecules on tryptophan residues within the consensus sequence W-X-X-W of the TPRs, and N-glycosylated. These other glycosylations can also facilitate secretion. In terms of tissue distribution, found in cartilage and skin.

The protein localises to the secreted. The protein resides in the extracellular space. It localises to the extracellular matrix. In terms of biological role, cleaves the propeptides of type II collagen prior to fibril assembly. Does not act on types I and III collagens. This Homo sapiens (Human) protein is A disintegrin and metalloproteinase with thrombospondin motifs 3 (ADAMTS3).